A 716-amino-acid chain; its full sequence is Dynein axonemal intermediate chain 7 (716 aa).

Belongs to the DNAI7 family. In terms of assembly, part of the multisubunit axonemal dynein complex formed at least of two heavy chains and a number of intermediate and light chains. Interacts with tubulin. Associates with microtubule. In terms of processing, ubiquitinated. Ubiquitination leads to its degradation through the 26S proteasome. Ubiquitin-proteasome-mediated DNAI7 degradation occurs in mitosis.

The protein resides in the cell projection. It is found in the cilium. It localises to the cytoplasm. Functionally, via its association with the multisubunit axonemal dynein complex, is potentially involved in the regulation of cilia function. May also act as a cell cycle regulator. In Homo sapiens (Human), this protein is Dynein axonemal intermediate chain 7.